The chain runs to 89 residues: HssA/B-like protein 16 (89 aa).

It belongs to the hssA/B family.

This is HssA/B-like protein 16 (hssl16) from Dictyostelium discoideum (Social amoeba).